Consider the following 312-residue polypeptide: Ornithine carbamoyltransferase (312 aa).

Carbamoyl phosphate-binding positions include 60-63 (STRT), Gln87, Arg111, and 138-141 (HPCQ). L-ornithine contacts are provided by residues Asn169, Asp229, and 233–234 (SM). Carbamoyl phosphate is bound by residues 268 to 269 (CL) and Arg296.

It belongs to the aspartate/ornithine carbamoyltransferase superfamily. OTCase family.

Its subcellular location is the cytoplasm. It carries out the reaction carbamoyl phosphate + L-ornithine = L-citrulline + phosphate + H(+). Its pathway is amino-acid biosynthesis; L-arginine biosynthesis; L-arginine from L-ornithine and carbamoyl phosphate: step 1/3. In terms of biological role, reversibly catalyzes the transfer of the carbamoyl group from carbamoyl phosphate (CP) to the N(epsilon) atom of ornithine (ORN) to produce L-citrulline. This is Ornithine carbamoyltransferase from Rhodopseudomonas palustris (strain BisA53).